Here is an 856-residue protein sequence, read N- to C-terminus: Rab effector MyRIP (856 aa).

The 121-residue stretch at 4–124 (KLDLSGLTDD…TQSLEWFYNN (121 aa)) folds into the RabBD domain. An FYVE-type zinc finger spans residues 63–105 (CCMRCCSPFTFLVNARRRCGECKFSVCKSCCSYQKHEKLWVCC). The interval 143–560 (KKHRLESGAC…AQVSDNVSET (418 aa)) is myosin-binding. The interval 193–209 (VALQVAEEAIEEAISKA) is PKA-binding. Residues 232–248 (LAEELAGTILQRIIRKQ) form a negative regulation of PKA-binding region. Positions 251-287 (KADLHAEEEEPECTRPQSSGVKARGEGTAAPPGRHKA) are disordered. S299 is subject to Phosphoserine. Residues 302 to 311 (TEDTLKTSSA) are compositionally biased toward polar residues. 6 disordered regions span residues 302–323 (TEDT…DRAQ), 350–376 (QSPD…KPKS), 392–578 (YDEL…SAEE), 592–625 (SEKE…NNQG), 778–805 (RRDQ…APPV), and 826–845 (LLQG…TKDL). S351 carries the phosphoserine modification. Residues 395–405 (LGSDSEEDFDY) are compositionally biased toward acidic residues. 2 stretches are compositionally biased toward low complexity: residues 427–437 (PAQAQSSGQGP) and 450–460 (SDSETSSTSSS). The segment at 495–856 (FNPQAAGGET…EPVLESAVMY (362 aa)) is actin-binding. Composition is skewed to polar residues over residues 551–574 (AQVS…SSTD), 613–625 (QKGS…NNQG), 784–793 (RSQVQTIDTS), and 826–843 (LLQG…SNTK).

Binds MYO5A, MYO7A and F-actin. Binds RAB27A that has been activated by GTP-binding via its N-terminus. Interacts with PRKAR2A. Interacts with components of the exocyst complex, including EXOC3 and EXOC4.

Its subcellular location is the cytoplasm. The protein localises to the perinuclear region. It localises to the cytoplasmic vesicle. It is found in the secretory vesicle. The protein resides in the melanosome. Functionally, rab effector protein involved in melanosome transport. Serves as link between melanosome-bound RAB27A and the motor proteins MYO5A and MYO7A. May link RAB27A-containing vesicles to actin filaments. Functions as a protein kinase A-anchoring protein (AKAP). May act as a scaffolding protein that links PKA to components of the exocytosis machinery, thus facilitating exocytosis, including insulin release. This chain is Rab effector MyRIP (Myrip), found in Rattus norvegicus (Rat).